The sequence spans 123 residues: Succinate dehydrogenase assembly factor 3, mitochondrial (123 aa).

The transit peptide at 1–31 directs the protein to the mitochondrion; it reads MANPAHISAVRTLYKKILVLHRFLPIDLRAL.

The protein belongs to the complex I LYR family. SDHAF3 subfamily. Interacts with sdhb within an sdha-sdhb subcomplex.

It is found in the mitochondrion matrix. Its function is as follows. Plays an essential role in the assembly of succinate dehydrogenase (SDH), an enzyme complex (also referred to as respiratory complex II) that is a component of both the tricarboxylic acid (TCA) cycle and the mitochondrial electron transport chain, and which couples the oxidation of succinate to fumarate with the reduction of ubiquinone (coenzyme Q) to ubiquinol. Promotes maturation of the iron-sulfur protein subunit sdhb of the SDH catalytic dimer, protecting it from the deleterious effects of oxidants. May act together with SDHAF1. The sequence is that of Succinate dehydrogenase assembly factor 3, mitochondrial from Danio rerio (Zebrafish).